The chain runs to 308 residues: Inactive C-alpha-formylglycine-generating enzyme 2 (308 aa).

Positions 1 to 33 (MRSEFWFPSMGSLLPPVLLLWLLSCPRLQLGHA) are cleaved as a signal peptide. A disulfide bond links C163 and C297. Residue N198 is glycosylated (N-linked (GlcNAc...) asparagine). The Ca(2+) site is built by N201, L202, D215, F217, D236, G239, V241, and E243. Over residues 281 to 291 (RMGNTPDSASD) the composition is skewed to polar residues. Residues 281–308 (RMGNTPDSASDNLGFRCASSAGRPKEDL) are disordered. A Non-canonical ER retention motif motif is present at residues 305–308 (KEDL).

Belongs to the sulfatase-modifying factor family. Homodimer and heterodimer with SUMF1.

It is found in the endoplasmic reticulum lumen. Lacks formylglycine generating activity and is unable to convert newly synthesized inactive sulfatases to their active form. Inhibits the activation of sulfatases by SUMF1. The chain is Inactive C-alpha-formylglycine-generating enzyme 2 from Mus musculus (Mouse).